A 525-amino-acid polypeptide reads, in one-letter code: Golgi resident protein GCP60 (525 aa).

Ala2 is modified (N-acetylalanine). The interval 12-68 (VSLDGLTLSPDSEERPGAEGAPPQTPPSSAPGNGLGSGASGQQREPGEAAAEGAAEE) is disordered. Position 13 is a phosphoserine (Ser13). Thr18 carries the post-translational modification Phosphothreonine. Phosphoserine is present on residues Ser20 and Ser40. Residues 52–64 (GQQREPGEAAAEG) show a composition bias toward low complexity. The 92-residue stretch at 80–171 (LEELYGLALR…LNKCCPLLSA (92 aa)) folds into the ACB domain. Residues 169–254 (LSAYVASHRI…AALNSQTAVQ (86 aa)) are a coiled coil. The tract at residues 180–226 (KEEEEKRRKAEEERRQREEEERERLQKEEEKRKREKEDRLRREEEER) is disordered. The segment at 238-305 (QQKQQIMAAL…QQQAALQKQQ (68 aa)) is q domain; Interaction with PI4KB, TBC1D22A and TBC1D22B. Residues 319-336 (KVNTAGASDTLSVNGQAK) are compositionally biased toward polar residues. The segment at 319–346 (KVNTAGASDTLSVNGQAKTHTENSEKVL) is disordered. The segment covering 337–346 (THTENSEKVL) has biased composition (basic and acidic residues). The GOLD domain occupies 381 to 523 (KEKIRQDADS…SKSVYYRVYY (143 aa)). Residues 448-470 (SDEEEEEEENVTCEEKAKKNANK) adopt a coiled-coil conformation.

In terms of assembly, homodimer. Interacts with the C-terminal cytoplasmic domain of giantin/GOLGB1. Interacts with PBR and PKA regulatory subunit RI-alpha. Does not interact with PKA regulatory subunit RI-beta nor PKA regulatory subunit RII-alpha. Interacts (via Q domain) with PI4KB (via N-terminus). Interacts (via Q domain) with TBC1D22A and TBC1D22B; interactions with PI4KB and with TBC1D22A and TBC1D22B are mutually exclusive. Interacts with C10ORF76 and RAB11B. As to expression, expressed in brain (hippocampus, olfactory bulb, neuronal and glial cells of the cortex), eye, submaxillary gland, testis (interstitial and tubular compartments), ovary (granulosa cells, theca cells at late stages and primary follicles), adrenal gland (fasciculata and glomerulosa cells), heart, liver, and steroidogenic cell lines.

The protein localises to the golgi apparatus membrane. It localises to the mitochondrion. In terms of biological role, involved in the maintenance of Golgi structure by interacting with giantin, affecting protein transport between the endoplasmic reticulum and Golgi. Involved in hormone-induced steroid biosynthesis in testicular Leydig cells. Recruits PI4KB to the Golgi apparatus membrane; enhances the enzyme activity of PI4KB activity via its membrane recruitment thereby increasing the local concentration of the substrate in the vicinity of the kinase. In Mus musculus (Mouse), this protein is Golgi resident protein GCP60 (Acbd3).